We begin with the raw amino-acid sequence, 355 residues long: UDP-N-acetylglucosamine--N-acetylmuramyl-(pentapeptide) pyrophosphoryl-undecaprenol N-acetylglucosamine transferase (355 aa).

UDP-N-acetyl-alpha-D-glucosamine is bound by residues 15–17, asparagine 127, arginine 163, serine 191, isoleucine 244, 263–268, and glutamine 288; these read TGG and ALTVSE.

It belongs to the glycosyltransferase 28 family. MurG subfamily.

The protein localises to the cell inner membrane. The catalysed reaction is di-trans,octa-cis-undecaprenyl diphospho-N-acetyl-alpha-D-muramoyl-L-alanyl-D-glutamyl-meso-2,6-diaminopimeloyl-D-alanyl-D-alanine + UDP-N-acetyl-alpha-D-glucosamine = di-trans,octa-cis-undecaprenyl diphospho-[N-acetyl-alpha-D-glucosaminyl-(1-&gt;4)]-N-acetyl-alpha-D-muramoyl-L-alanyl-D-glutamyl-meso-2,6-diaminopimeloyl-D-alanyl-D-alanine + UDP + H(+). It participates in cell wall biogenesis; peptidoglycan biosynthesis. Cell wall formation. Catalyzes the transfer of a GlcNAc subunit on undecaprenyl-pyrophosphoryl-MurNAc-pentapeptide (lipid intermediate I) to form undecaprenyl-pyrophosphoryl-MurNAc-(pentapeptide)GlcNAc (lipid intermediate II). The chain is UDP-N-acetylglucosamine--N-acetylmuramyl-(pentapeptide) pyrophosphoryl-undecaprenol N-acetylglucosamine transferase from Cronobacter sakazakii (strain ATCC BAA-894) (Enterobacter sakazakii).